The following is a 228-amino-acid chain: Probable septum site-determining protein MinC (228 aa).

It belongs to the MinC family. In terms of assembly, interacts with MinD and FtsZ.

Cell division inhibitor that blocks the formation of polar Z ring septums. Rapidly oscillates between the poles of the cell to destabilize FtsZ filaments that have formed before they mature into polar Z rings. Prevents FtsZ polymerization. This chain is Probable septum site-determining protein MinC, found in Pectobacterium atrosepticum (strain SCRI 1043 / ATCC BAA-672) (Erwinia carotovora subsp. atroseptica).